Here is a 51-residue protein sequence, read N- to C-terminus: Methionine aminopeptidase (51 aa).

This sequence belongs to the peptidase M24A family. Methionine aminopeptidase type 1 subfamily. As to quaternary structure, monomer. It depends on Co(2+) as a cofactor. Zn(2+) serves as cofactor. Requires Mn(2+) as cofactor. The cofactor is Fe(2+).

The catalysed reaction is Release of N-terminal amino acids, preferentially methionine, from peptides and arylamides.. Its function is as follows. Removes the N-terminal methionine from nascent proteins. The N-terminal methionine is often cleaved when the second residue in the primary sequence is small and uncharged (Met-Ala-, Cys, Gly, Pro, Ser, Thr, or Val). Requires deformylation of the N(alpha)-formylated initiator methionine before it can be hydrolyzed. The chain is Methionine aminopeptidase (map) from Geobacillus stearothermophilus (Bacillus stearothermophilus).